The primary structure comprises 430 residues: Aspartate aminotransferase, mitochondrial (430 aa).

The transit peptide at 1–29 (MALLHSGRVLSGIAAAFHPGLAAAASARA) directs the protein to the mitochondrion. Thr-48 carries the post-translational modification Phosphothreonine. The residue at position 59 (Lys-59) is an N6-acetyllysine. Gly-65 provides a ligand contact to substrate. Residue Lys-73 is modified to N6-acetyllysine; alternate. Lys-73 carries the N6-succinyllysine; alternate modification. Position 82 is an N6-acetyllysine (Lys-82). Position 90 is an N6-acetyllysine; alternate (Lys-90). N6-succinyllysine; alternate is present on Lys-90. Tyr-96 carries the post-translational modification 3'-nitrotyrosine; alternate. Tyr-96 carries the phosphotyrosine; alternate modification. N6-acetyllysine; alternate occurs at positions 107 and 122. Lys-107 and Lys-122 each carry N6-succinyllysine; alternate. Residue Ser-143 is modified to Phosphoserine. Lys-159 carries the post-translational modification N6-acetyllysine; alternate. Lys-159 is modified (N6-succinyllysine; alternate). Residue Trp-162 participates in substrate binding. Lys-185 carries the post-translational modification N6-acetyllysine; alternate. Lys-185 carries the post-translational modification N6-succinyllysine; alternate. Position 215 (Asn-215) interacts with substrate. Position 227 is an N6-succinyllysine (Lys-227). Lys-234 bears the N6-acetyllysine mark. An N6-acetyllysine; alternate mark is found at Lys-279 and Lys-296. At Lys-279 the chain carries N6-(pyridoxal phosphate)lysine; alternate. Lys-296 carries the post-translational modification N6-succinyllysine; alternate. Lys-302 is subject to N6-acetyllysine. N6-acetyllysine; alternate is present on Lys-309. At Lys-309 the chain carries N6-succinyllysine; alternate. An Asymmetric dimethylarginine modification is found at Arg-313. Position 333 is a phosphothreonine (Thr-333). Position 338 is an N6-acetyllysine; alternate (Lys-338). Residue Lys-338 is modified to N6-succinyllysine; alternate. Lys-345 carries the N6-acetyllysine modification. Lys-363 carries the post-translational modification N6-acetyllysine; alternate. N6-succinyllysine; alternate is present on Lys-363. N6-acetyllysine is present on residues Lys-364 and Lys-387. 2 positions are modified to N6-acetyllysine; alternate: Lys-396 and Lys-404. 2 positions are modified to N6-succinyllysine; alternate: Lys-396 and Lys-404. Arg-407 serves as a coordination point for substrate.

This sequence belongs to the class-I pyridoxal-phosphate-dependent aminotransferase family. Homodimer. Pyridoxal 5'-phosphate serves as cofactor.

The protein localises to the mitochondrion matrix. Its subcellular location is the cell membrane. The enzyme catalyses L-aspartate + 2-oxoglutarate = oxaloacetate + L-glutamate. It carries out the reaction L-kynurenine + 2-oxoglutarate = kynurenate + L-glutamate + H2O. Functionally, catalyzes the irreversible transamination of the L-tryptophan metabolite L-kynurenine to form kynurenic acid (KA). As a member of the malate-aspartate shuttle, it has a key role in the intracellular NAD(H) redox balance. Is important for metabolite exchange between mitochondria and cytosol, and for amino acid metabolism. Facilitates cellular uptake of long-chain free fatty acids. This chain is Aspartate aminotransferase, mitochondrial (GOT2), found in Macaca fascicularis (Crab-eating macaque).